Reading from the N-terminus, the 485-residue chain is Predicted GPI-anchored protein 27 (485 aa).

An N-terminal signal peptide occupies residues 1–20 (MHFTSSLLATLIWFTLPVQS). N-linked (GlcNAc...) asparagine glycans are attached at residues N30, N86, N96, and N444. G467 is lipidated: GPI-anchor amidated glycine. Positions 468–485 (LVLVSSGVLLGTCLLFIL) are cleaved as a propeptide — removed in mature form.

It is found in the cell membrane. In Candida albicans (strain SC5314 / ATCC MYA-2876) (Yeast), this protein is Predicted GPI-anchored protein 27 (PGA27).